The primary structure comprises 588 residues: Adenine deaminase (588 aa).

This sequence belongs to the metallo-dependent hydrolases superfamily. Adenine deaminase family. In terms of assembly, homodimer. Mn(2+) is required as a cofactor.

It carries out the reaction adenine + H2O + H(+) = hypoxanthine + NH4(+). The chain is Adenine deaminase from Escherichia coli O81 (strain ED1a).